A 282-amino-acid polypeptide reads, in one-letter code: MKALEVDNAQNIRTAFFISDGTAITAETLGRAILSQFASVPFETRVLPYVDNLERAEDAVVQINTAYQRDGLLPLVFDTIVSPEIREKINSAHSCNLDMYEGLIGRVAEETGVEPDGHSGHAHDNVDSETYKERIDAVHFALDNDDGARTRHYHAADIILIGVSRSGKTPTSLYLALQFGIRAANYPLTEEDLNDNQLPKALREHKHKLFGLIIDTDRLVKIRQERRAGSRYSSYQQCQQEQRAIQGIYTSQGIPSLDVSEMSVEEIATRILQMTGLKRRIG.

162 to 169 (GVSRSGKT) contacts ADP.

Belongs to the pyruvate, phosphate/water dikinase regulatory protein family. PSRP subfamily.

It catalyses the reaction [pyruvate, water dikinase] + ADP = [pyruvate, water dikinase]-phosphate + AMP + H(+). The catalysed reaction is [pyruvate, water dikinase]-phosphate + phosphate + H(+) = [pyruvate, water dikinase] + diphosphate. Bifunctional serine/threonine kinase and phosphorylase involved in the regulation of the phosphoenolpyruvate synthase (PEPS) by catalyzing its phosphorylation/dephosphorylation. The chain is Putative phosphoenolpyruvate synthase regulatory protein from Psychrobacter arcticus (strain DSM 17307 / VKM B-2377 / 273-4).